Here is a 3218-residue protein sequence, read N- to C-terminus: MKNAIHPENCNGAGTEEEASSAFHAEIDRVLLNNNGNHGDSSNEGGGGNGSGRGGATGSGNIAGLGGSESMWSPGGGKSHDVAQAFANALLLRNMNHVVGKGQPVVQNHRKAYQCKGDTINPMANGEDLRLSKIIRRLINENNPTVSLELCSKLDQAVRTPINMGYMTCSFVWILDNMLTLYKQCPPPVLEECSKTLGLIGFINRKSYPIYEEFIVKNYKSSKRMQKYMIMALRATLSCDTKCELHMYADKIMLLLKDFLENAESADIFIVVSNTLVQFAASYAETFECHFTDVVDIVIGWQLEAGQPTDLKTHCAQVLEQLTPFFSKQIDFSYGLLDQFVEDITTLEEGEPANTAERVGAFVGAFNTLLKCLARMQIFVGMPTCECIVKMAVDHLIKIMPTLHLNTEALVNINELICICLLNNFTGLDPILLEQVLLDQVKRMISLTELQRQSVLYLLLCTVRRLRARLTPSLVHFIFQSNPYMTKVRLRSPGETSYKLLLRTCQETLLIRNVPLLQQAYKYLVDDIDACLEKLLITAPRSKARKASVLLVFHLSALAALAKQTSSIIGMYACKPSILELLLTNCRAHELKFWSKYPAAQQAIFGLLVVHCQANHNFRTNSSLLRDQELSAENTSPTANSFASILRFLDSVLGQAHQLAPQNLRVLLQWIQMLLRECREKIDLLMEQENFRGICRNIAATASKLVPLESAACIQTVLDYGLERLEKYPKLLILYRDTALQQLQMLSTNYHAPYFQIYAQLPLHLTLTGGESSMPGMASRRVSVWQQRISQYSAVRDNVFRDFFDRVQKPEQDSLIHCLRELFVRSCQVAPQDERQMNLSQCTKRCQRLAIAWLQFEAARYCVDQRLRTTVGKPQETFLGFEAIIMRHARLLSGCAKEIERSALDDLSLEELLSMQSNLSLLLGFLDALEKLIYNAAEGSAFALRPPEKQVAAFFRLNNPTCQSWFNRIRIGVVIIAMHVQQPELVIRYAQQILVNSKTQDPTYSQAIVYMAWSLVSCQEADSLRGLRLWARGKSCKSYKWLKYAADQAAGKRESALAGYRTILAEKELQSELEPHTRQFVVSQMMQCLQDLGQWSQLVELKQQQMTRPEDRELNPFLQRSNVEVNALERLLAKSEESCSSMDALGGVFQQLSLWPSNWDESVSSSGLSERASFSSIHMRQRTEDIVLHKLLEDRCVPDQAKNLLDTQWRDSLLNPSFDQRSCKELTLLRHIVQGVSGGQELSLLPVSSGRCQNRSKFISSAILMRCLAWTQLLRQHCAPGSWETLCLDAAAAAREEGNLQLAETLLTQFFGQPIGEIAALFSLEQGVQTDNPEMLRGYSELVKCLHLQQQQSQTHSGDLSSSIDVCAALCLNIQKSNNQPAAGADLLLNLADWIAVRTCNGLTTNQSPVLIQLLDQLPECPLTCDSSQPLAIPQAERMVARLVHSCLQQRPNYAEALIAYGNWCYRWGKKVADSCCVLTQADATAISQALDIPQPLESEKLDELLQALSTEQPPANCVEVCPDAARARDDEAAKNRLRRLTFLADKTPEALDAILQIWRRAIANTYDYYKDAARSYFQYLSFKSGSGPEKPEGEGVVSQRERLHVDDSNLVTTTLRLLRLIVKHASGLQEVLEQGLHTTPIAPWKVIIPQLFSRLNHHEPYVRKSVCDLLCRLAKSRPQLVIFPAVVGANREQQDATAPPATARPTTEDACCYGYLLGELSKQAPEAVQHVKLMVKELRRVCLLWDEYWIHSLAHIYNTYVSRVSALATDFRPDDHEGKNNRFNVWRPQLLADLEALVAVTSRPPETTYERSFRKRFDAPIRLTVDALRHRRYPEAWDKLKQLYHILQSNMIRGSGSTLKMQSISPVLCGIGRMRISMPGLDAHGPDGDQVYIESVESSVCVLPTKTKPKKVAFYGSNGQRYTFLFKGMEDLHLDERIMQFLSISNAIMACRSDAPGNGCYRAHHYSVIPLGPQSGLISWVDGVTPVFALYKKWQQRRSQVAGNAGAGAVANVPRRFTDLFYNKLSPLLAKHNMQVSDPRRQWPISVLLQVLDELSQETPNDLLARELWCQAGNAAEWRQSVRRFVRCMSVMSMIGYVIGLGDRHLDNVLINLGSGDIVHIDYNVCFEKGRTLRIPEKVPFRLTQNLVQAMGITGIEGPFRLGCEYVLKVMRKERETLLTLLEAFVYDPLVDWTTNDDAQALRRSLNAKLQESADGGGAGGLGVGDLKYHKKDKNKGKPLDSDVKRQPFLSKLGMLQKYWSTNKTELMPQLEEMEQEVGNLQAAQAKQVVAEEELVKLNQRSALIAEIKSLGTAIESHSFNTASLRNAVRRGHSEALALLSTERLPDFGRVQCILRSYGQCLQLYHLLDLQGQLVKLQMESNSENAREFSALTEALQLSGLDSMRSQLNELLGRMDMVAQKSSKHLQEYAGVMNFYPEQSHRQNLFVRFHDSFATYIQNGYTADSTTNTNSPSSSIICKADVVGVAEAMEYSWERLGCQLHEASKLYAANQAQALTLGAPTTALLSMIVQSGCSQLLLKASLVRTLDRAGGAFAAYEQVALASHDDGLLHHQLLFIHLVRTMLQGVLVMTKEEDQHLAQLESLLSALSHLKKMFEYDLPANLYRLLLLQPNLGKLSALCHLSASSLAQLFLEATMENGHKPPDQFPVERRFLLTLQPVYDQFLLASTSLDSLVSSMQSMLEDVHDVQTQQIMELGLMRSCHTELNDECFFGLVSEALESSRTCDVREMARPMLGFIHRLQVEKLAGLLPILTRNFYTAVGPQCLPTASCGDPAQADHLCESLFISLQSDGALLQQQAEIALLSQQVDLHTLAASAQYWAYSEALGSQLRCGPHIVSRPKLTAAIGECWLELDQKLTALQQLQAGLESQLSQLQTQRSNWNRNHIDNLLRMEQCNKQRTMSHVALLQKMTDGAGAVARLEQNAIVVGEEGQALVDHLEQWLAAHGQWQASSSRISAVEQSMVELLDPEGAIDHYWLENVQGLLEEQTCKVHREIAAIEGEQQSKHRFICTLLKETLRLLENMPRFHVQSLCSEAQAQGQGKMEYANVQLLSDHLREGQGLMQSLYMRLQELRKDICSDRRVLQPSMLQNWRHQLEMILTLAKQEVNEFFKGLEDFMQHAGETDSYEIFTHAKGSGNVHEQKRNAYGVSVWKKIRMKLEGRDPDSNQRSTVAEQVDYVIREACNPENLAVLYEGWTPWV.

Residues 32–78 form a disordered region; it reads LNNNGNHGDSSNEGGGGNGSGRGGATGSGNIAGLGGSESMWSPGGGK. The segment covering 33–43 has biased composition (low complexity); the sequence is NNNGNHGDSSN. Over residues 44–67 the composition is skewed to gly residues; that stretch reads EGGGGNGSGRGGATGSGNIAGLGG. Serine 70 carries the post-translational modification Phosphoserine. Residues 1289–1692 enclose the FAT domain; it reads DAAAAAREEG…IFPAVVGANR (404 aa). Residues 1643–1678 form an HEAT repeat; the sequence is APWKVIIPQLFSRLNHHEPYVRKSVCDLLCRLAKSR. One can recognise a PI3K/PI4K catalytic domain in the interval 1897–2232; sequence VESSVCVLPT…LGVGDLKYHK (336 aa). The interval 1903-1909 is G-loop; the sequence is VLPTKTK. The catalytic loop stretch occupies residues 2101–2109; that stretch reads GLGDRHLDN. Positions 2121–2145 are activation loop; the sequence is HIDYNVCFEKGRTLRIPEKVPFRLT. Residues 3186–3218 enclose the FATC domain; that stretch reads QRSTVAEQVDYVIREACNPENLAVLYEGWTPWV.

It belongs to the PI3/PI4-kinase family. Component of a post-splicing multiprotein NMD complex. It depends on Mn(2+) as a cofactor.

The protein resides in the cytoplasm. It catalyses the reaction L-seryl-[protein] + ATP = O-phospho-L-seryl-[protein] + ADP + H(+). It carries out the reaction L-threonyl-[protein] + ATP = O-phospho-L-threonyl-[protein] + ADP + H(+). In terms of biological role, serine/threonine protein kinase involved in mRNA surveillance. Recognizes the substrate consensus sequence [ST]-Q. Involved in nonsense-mediated decay (NMD) of mRNAs containing premature stop codons, probably by phosphorylating Upf1. This chain is Serine/threonine-protein kinase Smg1 (nonC), found in Drosophila melanogaster (Fruit fly).